The sequence spans 182 residues: NADH-quinone oxidoreductase subunit B 2 (182 aa).

[4Fe-4S] cluster is bound by residues C47, C48, C113, and C142.

The protein belongs to the complex I 20 kDa subunit family. In terms of assembly, NDH-1 is composed of 14 different subunits. Subunits NuoB, C, D, E, F, and G constitute the peripheral sector of the complex. It depends on [4Fe-4S] cluster as a cofactor.

It is found in the cell inner membrane. It carries out the reaction a quinone + NADH + 5 H(+)(in) = a quinol + NAD(+) + 4 H(+)(out). In terms of biological role, NDH-1 shuttles electrons from NADH, via FMN and iron-sulfur (Fe-S) centers, to quinones in the respiratory chain. The immediate electron acceptor for the enzyme in this species is believed to be ubiquinone. Couples the redox reaction to proton translocation (for every two electrons transferred, four hydrogen ions are translocated across the cytoplasmic membrane), and thus conserves the redox energy in a proton gradient. The polypeptide is NADH-quinone oxidoreductase subunit B 2 (Anaeromyxobacter sp. (strain K)).